A 237-amino-acid polypeptide reads, in one-letter code: Phosphoribosylaminoimidazole-succinocarboxamide synthase (237 aa).

The protein belongs to the SAICAR synthetase family.

It carries out the reaction 5-amino-1-(5-phospho-D-ribosyl)imidazole-4-carboxylate + L-aspartate + ATP = (2S)-2-[5-amino-1-(5-phospho-beta-D-ribosyl)imidazole-4-carboxamido]succinate + ADP + phosphate + 2 H(+). The protein operates within purine metabolism; IMP biosynthesis via de novo pathway; 5-amino-1-(5-phospho-D-ribosyl)imidazole-4-carboxamide from 5-amino-1-(5-phospho-D-ribosyl)imidazole-4-carboxylate: step 1/2. The protein is Phosphoribosylaminoimidazole-succinocarboxamide synthase of Salmonella agona (strain SL483).